Reading from the N-terminus, the 227-residue chain is Phosphoglycolate phosphatase (227 aa).

The active-site Nucleophile is D8. Positions 8 and 10 each coordinate Mg(2+). Position 150 (K150) interacts with substrate. The Mg(2+) site is built by D173 and D177.

Belongs to the archaeal SPP-like hydrolase family. The cofactor is Mg(2+).

It catalyses the reaction 2-phosphoglycolate + H2O = glycolate + phosphate. Functionally, catalyzes the dephosphorylation of 2-phosphoglycolate. This is Phosphoglycolate phosphatase from Sulfolobus acidocaldarius (strain ATCC 33909 / DSM 639 / JCM 8929 / NBRC 15157 / NCIMB 11770).